Consider the following 183-residue polypeptide: Calmodulin-like protein 3 (183 aa).

4 EF-hand domains span residues 7 to 42 (EQIA…LGQS), 43 to 78 (PTEA…KLRD), 80 to 115 (GAED…LSDP), and 116 to 151 (LSDD…KRRQ). Ca(2+) is bound by residues aspartate 20, aspartate 22, aspartate 24, threonine 26, glutamate 31, aspartate 56, aspartate 58, serine 60, serine 62, glutamate 67, aspartate 93, aspartate 95, asparagine 97, glutamate 104, aspartate 129, aspartate 131, aspartate 133, glutamine 135, and glutamate 140. A disordered region spans residues 154–183 (MEGHGSGGHRSSNSHKKSGCCGPNSSCTIL). Residues cysteine 173 and cysteine 174 are each lipidated (S-palmitoyl cysteine). The residue at position 180 (cysteine 180) is a Cysteine methyl ester. Cysteine 180 carries S-farnesyl cysteine lipidation. A propeptide spans 181-183 (TIL) (removed in mature form).

The protein belongs to the calmodulin family.

Its subcellular location is the membrane. Functionally, potential calcium sensor. This is Calmodulin-like protein 3 (CML3) from Oryza sativa subsp. japonica (Rice).